Here is a 676-residue protein sequence, read N- to C-terminus: ATP-dependent zinc metalloprotease FtsH (676 aa).

The Cytoplasmic segment spans residues 1–12 (MSFFDKIFKKFH). A helical membrane pass occupies residues 13–33 (MGVLYFAVILIGATFIYCYFT). At 34 to 115 (KHEKKDNNTF…DPRPWNGYEH (82 aa)) the chain is on the extracellular side. A helical transmembrane segment spans residues 116 to 136 (VFWVFRQCLTMLFFYCFFLFF). Residues 137 to 676 (ADTIKQMGQE…EVLSTDSEQT (540 aa)) are Cytoplasmic-facing. Position 212–219 (212–219 (GPPGTGKT)) interacts with ATP. Position 433 (histidine 433) interacts with Zn(2+). Residue glutamate 434 is part of the active site. Positions 437 and 509 each coordinate Zn(2+). Residues 610–676 (EKEETNAPTQ…EVLSTDSEQT (67 aa)) are disordered. Residues 615-636 (NAPTQTTSQMSSNNETTNTDKT) show a composition bias toward polar residues. The span at 650-667 (NQESNESNPNNNEKASPE) shows a compositional bias: low complexity.

It in the central section; belongs to the AAA ATPase family. This sequence in the C-terminal section; belongs to the peptidase M41 family. Homohexamer. Zn(2+) is required as a cofactor.

The protein resides in the cell membrane. Its function is as follows. Acts as a processive, ATP-dependent zinc metallopeptidase for both cytoplasmic and membrane proteins. Plays a role in the quality control of integral membrane proteins. This Aster yellows witches'-broom phytoplasma (strain AYWB) protein is ATP-dependent zinc metalloprotease FtsH.